The following is a 189-amino-acid chain: UPF0301 protein PST_3956 (189 aa).

It belongs to the UPF0301 (AlgH) family.

This Stutzerimonas stutzeri (strain A1501) (Pseudomonas stutzeri) protein is UPF0301 protein PST_3956.